The following is a 480-amino-acid chain: Endothelial transcription factor GATA-2 (480 aa).

Serine 73 is modified (phosphoserine). At arginine 86 the chain carries Asymmetric dimethylarginine. Positions 119-209 are disordered; that stretch reads SPFSKTPLHP…GSAARGEDKD (91 aa). Residues 143-153 show a composition bias toward gly residues; that stretch reads GAGGGSGGGSG. The span at 185–203 shows a compositional bias: low complexity; the sequence is PSTTGAASPASSSAGGSAA. Serine 192 carries the post-translational modification Phosphoserine. GATA-type zinc fingers lie at residues 295-319 and 349-373; these read CVNC…CNAC and CANC…CNAC. Lysine 389 participates in a covalent cross-link: Glycyl lysine isopeptide (Lys-Gly) (interchain with G-Cter in SUMO2). Residues 448-480 are disordered; that stretch reads HSGHILPTPTPIHPSSSLSFGHPHPSSMVTAMG.

As to quaternary structure, interacts with BRD3. Interacts with AR and CCAR1. Interacts with MDFIC. Endothelial cells.

Its subcellular location is the nucleus. Functionally, transcriptional activator which regulates endothelin-1 gene expression in endothelial cells. Binds to the consensus sequence 5'-AGATAG-3'. This Homo sapiens (Human) protein is Endothelial transcription factor GATA-2 (GATA2).